The following is a 440-amino-acid chain: D-serine dehydratase (440 aa).

Residue K116 is modified to N6-(pyridoxal phosphate)lysine.

It belongs to the serine/threonine dehydratase family. DsdA subfamily. In terms of assembly, monomer. Pyridoxal 5'-phosphate serves as cofactor.

The enzyme catalyses D-serine = pyruvate + NH4(+). This chain is D-serine dehydratase, found in Salmonella choleraesuis (strain SC-B67).